Reading from the N-terminus, the 442-residue chain is tRNA-2-methylthio-N(6)-dimethylallyladenosine synthase (442 aa).

An MTTase N-terminal domain is found at 5–122; it reads KKVFIKTLGC…LPEMIKQKQK (118 aa). [4Fe-4S] cluster-binding residues include Cys-14, Cys-51, Cys-85, Cys-159, Cys-163, and Cys-166. The region spanning 145-378 is the Radical SAM core domain; it reads KAEGAKAYVS…DLLNSNAQII (234 aa). The 63-residue stretch at 380–442 folds into the TRAM domain; it reads RQMVGTNQRI…LPNSLRGELI (63 aa).

This sequence belongs to the methylthiotransferase family. MiaB subfamily. As to quaternary structure, monomer. Requires [4Fe-4S] cluster as cofactor.

The protein localises to the cytoplasm. The enzyme catalyses N(6)-dimethylallyladenosine(37) in tRNA + (sulfur carrier)-SH + AH2 + 2 S-adenosyl-L-methionine = 2-methylsulfanyl-N(6)-dimethylallyladenosine(37) in tRNA + (sulfur carrier)-H + 5'-deoxyadenosine + L-methionine + A + S-adenosyl-L-homocysteine + 2 H(+). Its function is as follows. Catalyzes the methylthiolation of N6-(dimethylallyl)adenosine (i(6)A), leading to the formation of 2-methylthio-N6-(dimethylallyl)adenosine (ms(2)i(6)A) at position 37 in tRNAs that read codons beginning with uridine. The protein is tRNA-2-methylthio-N(6)-dimethylallyladenosine synthase of Francisella tularensis subsp. holarctica (strain LVS).